A 2785-amino-acid polypeptide reads, in one-letter code: Testis-expressed protein 15 (2785 aa).

Residues 262–274 show a composition bias toward low complexity; that stretch reads SSSFPSSLSNAFS. 8 disordered regions span residues 262–331, 596–620, 661–683, 904–924, 943–1064, 2276–2458, 2470–2511, and 2571–2601; these read SSSF…PSSD, EQRD…SEKQ, NGKP…APND, TEST…GMCS, VQES…QGRI, NRQE…TNDK, DIDA…LVPD, and TQPI…GNSA. The span at 275–286 shows a compositional bias: basic and acidic residues; it reads DVRKQKHSEEQV. A compositionally biased stretch (polar residues) spans 314–331; it reads TCSNDSQGHFSQESPSSD. The segment covering 596 to 611 has biased composition (basic and acidic residues); the sequence is EQRDDKNPNEAKEHNT. Polar residues-rich tracts occupy residues 962 to 989 and 1021 to 1031; these read HNTH…TVMN and HASSSRGQNIA. A compositionally biased stretch (basic and acidic residues) spans 1033 to 1042; that stretch reads KDLREHETHE. 8 stretches are compositionally biased toward polar residues: residues 1049–1064, 2291–2314, 2327–2338, 2353–2387, 2394–2415, 2431–2454, 2491–2502, and 2585–2601; these read SHGS…QGRI, DSSQ…NISD, EVSQGKGNTDTV, NIQT…SISA, RQSS…CTPK, ASLT…SVAE, DHTQISPSNLTA, and DAPN…GNSA.

The protein belongs to the TEX15 family. In terms of assembly, interacts with PIWIL4. Interacts with PIWIL2. Detected in testis and ovary, and at lower levels in lung and brain.

It is found in the cytoplasm. The protein localises to the nucleus. Functionally, required during spermatogenesis for normal chromosome synapsis and meiotic recombination in germ cells. Necessary for formation of DMC1 and RAD51 foci on meiotic chromosomes, suggesting a specific role in DNA double-stranded break repair. Essential executor of PIWIL4-piRNA pathway directed transposon DNA methylation and silencing in the male embryonic germ cells. PIWIL4-piRNA binds to nascent transposon transcripts and interacts with TEX15, which may in turn recruit the epigenetic silencing machinery to the transposon loci. Not required for piRNA biosynthesis. The polypeptide is Testis-expressed protein 15 (Mus musculus (Mouse)).